A 356-amino-acid polypeptide reads, in one-letter code: MTGYHALRRVLFLISPERIHTWVFALLRAVTTPDLLRRALQGRLAPRDPVLASTVFGVRFPGPLGLAAGFDKDGRGLHTWPALGFGYAEVGTVTAHPQPGNPEPRLFRLPEDRALLNRMGFNNDGAARLAQRLTRHTSDAPVGVNIGKTKATPADRAVEDYAQSARQLGPLATFLVVNVSSPNTPGLRDLQAVESLRPILTAVRAQTSTPVLVKIAPDLSDADVDEIADLAVELGLAGIVATNTTISRAGLKTPGVEELGPGGVSGAPVAARSLEVLRRLYRRAGDRLVLISVGGIETADDAWERITSGASLLQGYTGFVYGGGLWAKHIHDGLATRLRAEGFTSLSDAVGSAMRQ.

Residues 68-72 (AGFDK) and Thr92 each bind FMN. Lys72 lines the substrate pocket. 117–121 (NRMGF) is a binding site for substrate. FMN is bound by residues Asn145 and Asn178. Asn178 serves as a coordination point for substrate. Catalysis depends on Ser181, which acts as the Nucleophile. Position 183 (Asn183) interacts with substrate. The FMN site is built by Lys214 and Thr242. 243–244 (NT) contributes to the substrate binding site. FMN-binding positions include Gly266, Gly295, and 316–317 (YT).

This sequence belongs to the dihydroorotate dehydrogenase family. Type 2 subfamily. In terms of assembly, monomer. FMN is required as a cofactor.

It is found in the cell membrane. It carries out the reaction (S)-dihydroorotate + a quinone = orotate + a quinol. The protein operates within pyrimidine metabolism; UMP biosynthesis via de novo pathway; orotate from (S)-dihydroorotate (quinone route): step 1/1. Functionally, catalyzes the conversion of dihydroorotate to orotate with quinone as electron acceptor. This Mycobacterium sp. (strain KMS) protein is Dihydroorotate dehydrogenase (quinone).